The chain runs to 578 residues: Laccase-10 (578 aa).

A signal peptide spans 1–29 (MGARCLALLLLYGTLLLLLLLPQLPLAGA). Plastocyanin-like domains lie at 37-153 (NVKL…PKAG) and 163-319 (KDVP…YAPP). N-linked (GlcNAc...) asparagine glycosylation is found at N42 and N83. Cu cation-binding residues include H87 and H89. N-linked (GlcNAc...) asparagine glycosylation is present at N119. Residues H132 and H134 each coordinate Cu cation. 13 N-linked (GlcNAc...) asparagine glycosylation sites follow: N192, N208, N244, N307, N336, N384, N392, N402, N438, N445, N448, N451, and N461. The Plastocyanin-like 3 domain occupies 428 to 562 (DFPASPLEPF…KMAWVVNDGP (135 aa)). 7 residues coordinate Cu cation: H479, H482, H484, H541, C542, H543, and H547.

It belongs to the multicopper oxidase family. The cofactor is Cu cation.

The protein resides in the secreted. It is found in the extracellular space. The protein localises to the apoplast. The catalysed reaction is 4 hydroquinone + O2 = 4 benzosemiquinone + 2 H2O. In terms of biological role, lignin degradation and detoxification of lignin-derived products. This Oryza sativa subsp. japonica (Rice) protein is Laccase-10 (LAC10).